Here is a 119-residue protein sequence, read N- to C-terminus: Large ribosomal subunit protein bL20 (119 aa).

This sequence belongs to the bacterial ribosomal protein bL20 family.

Its function is as follows. Binds directly to 23S ribosomal RNA and is necessary for the in vitro assembly process of the 50S ribosomal subunit. It is not involved in the protein synthesizing functions of that subunit. The polypeptide is Large ribosomal subunit protein bL20 (Paracoccus denitrificans (strain Pd 1222)).